The primary structure comprises 330 residues: Aspartate--ammonia ligase (330 aa).

The protein belongs to the class-II aminoacyl-tRNA synthetase family. AsnA subfamily.

It localises to the cytoplasm. The catalysed reaction is L-aspartate + NH4(+) + ATP = L-asparagine + AMP + diphosphate + H(+). It functions in the pathway amino-acid biosynthesis; L-asparagine biosynthesis; L-asparagine from L-aspartate (ammonia route): step 1/1. This Streptococcus pyogenes serotype M1 protein is Aspartate--ammonia ligase.